A 453-amino-acid chain; its full sequence is Adenylyltransferase and sulfurtransferase MOCS3 (453 aa).

Residue threonine 62 is modified to Phosphothreonine. ATP-binding positions include glycine 101, aspartate 122, 129-133 (SNFHR), lysine 146, and 190-191 (DN). Zn(2+) contacts are provided by cysteine 231 and cysteine 234. The Glycyl thioester intermediate; for adenylyltransferase activity role is filled by cysteine 248. 2 residues coordinate Zn(2+): cysteine 306 and cysteine 309. The 97-residue stretch at 355–451 (QAQPHLLIDV…WTNSVDPSFP (97 aa)) folds into the Rhodanese domain. Cysteine 410 (cysteine persulfide intermediate; for sulfurtransferase activity) is an active-site residue.

This sequence in the N-terminal section; belongs to the HesA/MoeB/ThiF family. UBA4 subfamily. The cofactor is Zn(2+).

The protein resides in the cytoplasm. It is found in the cytosol. It catalyses the reaction [molybdopterin-synthase sulfur-carrier protein]-C-terminal Gly-Gly + ATP + H(+) = [molybdopterin-synthase sulfur-carrier protein]-C-terminal Gly-Gly-AMP + diphosphate. The catalysed reaction is [molybdopterin-synthase sulfur-carrier protein]-C-terminal Gly-Gly-AMP + S-sulfanyl-L-cysteinyl-[cysteine desulfurase] + AH2 = [molybdopterin-synthase sulfur-carrier protein]-C-terminal-Gly-aminoethanethioate + L-cysteinyl-[cysteine desulfurase] + A + AMP + 2 H(+). Its pathway is tRNA modification; 5-methoxycarbonylmethyl-2-thiouridine-tRNA biosynthesis. It functions in the pathway cofactor biosynthesis; molybdopterin biosynthesis. Plays a central role in 2-thiolation of mcm(5)S(2)U at tRNA wobble positions of cytosolic tRNA(Lys), tRNA(Glu) and tRNA(Gln). Also essential during biosynthesis of the molybdenum cofactor. Acts by mediating the C-terminal thiocarboxylation of sulfur carriers URM1 and MOCS2A. Its N-terminus first activates URM1 and MOCS2A as acyl-adenylates (-COAMP), then the persulfide sulfur on the catalytic cysteine is transferred to URM1 and MOCS2A to form thiocarboxylation (-COSH) of their C-terminus. The reaction probably involves hydrogen sulfide that is generated from the persulfide intermediate and that acts as a nucleophile towards URM1 and MOCS2A. Subsequently, a transient disulfide bond is formed. Does not use thiosulfate as sulfur donor; NFS1 probably acting as a sulfur donor for thiocarboxylation reactions. The chain is Adenylyltransferase and sulfurtransferase MOCS3 from Drosophila yakuba (Fruit fly).